The following is a 493-amino-acid chain: Ribosomal protein uS12 methylthiotransferase RimO (493 aa).

The MTTase N-terminal domain occupies 5–121; that stretch reads RTVALVTLGC…ISDRLQTILN (117 aa). [4Fe-4S] cluster contacts are provided by Cys-14, Cys-50, Cys-84, Cys-198, Cys-202, and Cys-205. In terms of domain architecture, Radical SAM core spans 184 to 415; that stretch reads LGTSPVASVK…QLAEELTSQR (232 aa). The TRAM domain occupies 417–487; sequence EERVGETLQV…GVDLVAEHHE (71 aa).

This sequence belongs to the methylthiotransferase family. RimO subfamily. It depends on [4Fe-4S] cluster as a cofactor.

It localises to the cytoplasm. It carries out the reaction L-aspartate(89)-[ribosomal protein uS12]-hydrogen + (sulfur carrier)-SH + AH2 + 2 S-adenosyl-L-methionine = 3-methylsulfanyl-L-aspartate(89)-[ribosomal protein uS12]-hydrogen + (sulfur carrier)-H + 5'-deoxyadenosine + L-methionine + A + S-adenosyl-L-homocysteine + 2 H(+). Its function is as follows. Catalyzes the methylthiolation of an aspartic acid residue of ribosomal protein uS12. The polypeptide is Ribosomal protein uS12 methylthiotransferase RimO (Streptomyces griseus subsp. griseus (strain JCM 4626 / CBS 651.72 / NBRC 13350 / KCC S-0626 / ISP 5235)).